The following is an 879-amino-acid chain: Levansucrase (879 aa).

Positions 1-37 (MTKEHKKMYKAGKYWAVATLVSASILMEVGVTTHADA) are cleaved as a signal peptide. 7 repeat units span residues 66 to 81 (DNAT…SIAN), 82 to 97 (DNAT…SIAN), 98 to 113 (DNAT…SIAN), 114 to 129 (DNAT…SVAN), 130 to 145 (DNAT…SVAN), 146 to 161 (DNAT…SVAN), and 162 to 177 (DNAT…SVAN). The 7 X 16 AA tandem repeats of D-N-A-T-S-G-S-T-K-Q-E-S-S-[IV]-A-N stretch occupies residues 66 to 177 (DNATSGSTKQ…STKQESSVAN (112 aa)). Composition is skewed to polar residues over residues 66–180 (DNAT…NDTK) and 189–213 (NTSN…AATQ). The segment at 66-213 (DNATSGSTKQ…NNEQPSAATQ (148 aa)) is disordered. Residues Trp311, Asp312, and Ser382 each coordinate sucrose. Asp312 serves as the catalytic Nucleophile. Asp460 is a Ca(2+) binding site. Sucrose is bound by residues Arg465 and Asp466. Gln491, Leu528, Asn530, and Asp562 together coordinate Ca(2+). Residue Glu563 participates in sucrose binding. The active-site Proton donor/acceptor is Glu565. Arg583 contacts sucrose. A disordered region spans residues 743–830 (SSGLGLKPHQ…TPAKPVQAGQ (88 aa)). The segment covering 754–821 (VNPSQPTTPA…KPVNPSQPTT (68 aa)) has biased composition (polar residues). The short motif at 841–845 (LPQTG) is the LPXTG sorting signal element. At Thr844 the chain carries Pentaglycyl murein peptidoglycan amidated threonine. Residues 845–879 (GENNSQSQTMSFIGILLAMFGSLLGFLGIKKRRND) constitute a propeptide, removed by sortase.

Belongs to the glycosyl hydrolase 68 family.

Its subcellular location is the secreted. The protein localises to the cell wall. It catalyses the reaction [6)-beta-D-fructofuranosyl-(2-&gt;](n) alpha-D-glucopyranoside + sucrose = [6)-beta-D-fructofuranosyl-(2-&gt;](n+1) alpha-D-glucopyranoside + D-glucose. With respect to regulation, ca(2+) may play an important structural role and promote stability of levansucrase. Its function is as follows. Fructosyltransferase that catalyzes the polymerization of the fructose moiety of sucrose to produce levan polymer and the fructo-oligosaccharide (FOS) 1-kestose. Also displays sucrose hydrolase activity. The polypeptide is Levansucrase (Fructilactobacillus sanfranciscensis (Lactobacillus sanfranciscensis)).